We begin with the raw amino-acid sequence, 122 residues long: Large ribosomal subunit protein bL17 (122 aa).

Belongs to the bacterial ribosomal protein bL17 family. As to quaternary structure, part of the 50S ribosomal subunit. Contacts protein L32.

This is Large ribosomal subunit protein bL17 from Neisseria meningitidis serogroup B (strain ATCC BAA-335 / MC58).